We begin with the raw amino-acid sequence, 801 residues long: Probable methionine--tRNA ligase (801 aa).

Positions 25 to 35 (PYVNNVPHLGN) match the 'HIGH' region motif. Positions 347-351 (KFSKS) match the 'KMSKS' region motif. An ATP-binding site is contributed by K350. Positions 606–633 (DKLKGTKLSDGGQKKEQKKQSGGSKSKN) are disordered. Positions 639–742 (TVAKLDIRVG…ESAAVGERVT (104 aa)) constitute a tRNA-binding domain.

This sequence belongs to the class-I aminoacyl-tRNA synthetase family.

The protein localises to the cytoplasm. The catalysed reaction is tRNA(Met) + L-methionine + ATP = L-methionyl-tRNA(Met) + AMP + diphosphate. This is Probable methionine--tRNA ligase from Oryza sativa subsp. japonica (Rice).